The primary structure comprises 450 residues: Protein DA1-related 3 (450 aa).

Positions 1 to 46 (MVRRKRQEEDEKIEIERVKEESLKLAKQAEEKRRLEESKEQGKRIQ) form a coiled coil. Composition is skewed to basic and acidic residues over residues 27–47 (KQAEEKRRLEESKEQGKRIQV) and 56–69 (TSKDKGQINHSKDV). The disordered stretch occupies residues 27–87 (KQAEEKRRLE…PSIDGKSEIG (61 aa)).

The sequence is that of Protein DA1-related 3 (DAR3) from Arabidopsis thaliana (Mouse-ear cress).